Here is a 145-residue protein sequence, read N- to C-terminus: MSEQGDQIEQVDVVEEVEVEAAAPETVSVEDALKEVLKRALVHDGLARGIREASKALDRRQAHLCVLCESCDQEAYVKLVEALCAESETPLIKVADPKVLGEWAGLCVLDRDGNARKVVGCSCVAVTDYGEDSAALQKLLESFSA.

It belongs to the eukaryotic ribosomal protein eS12 family. As to quaternary structure, component of the small ribosomal subunit (SSU). Mature yeast ribosomes consist of a small (40S) and a large (60S) subunit. The 40S small subunit contains 1 molecule of ribosomal RNA (18S rRNA) and at least 33 different proteins. The large 60S subunit contains 3 rRNA molecules (25S, 5.8S and 5S rRNA) and at least 46 different proteins.

It localises to the cytoplasm. Its function is as follows. Component of the ribosome, a large ribonucleoprotein complex responsible for the synthesis of proteins in the cell. The small ribosomal subunit (SSU) binds messenger RNAs (mRNAs) and translates the encoded message by selecting cognate aminoacyl-transfer RNA (tRNA) molecules. The large subunit (LSU) contains the ribosomal catalytic site termed the peptidyl transferase center (PTC), which catalyzes the formation of peptide bonds, thereby polymerizing the amino acids delivered by tRNAs into a polypeptide chain. The nascent polypeptides leave the ribosome through a tunnel in the LSU and interact with protein factors that function in enzymatic processing, targeting, and the membrane insertion of nascent chains at the exit of the ribosomal tunnel. This Schizosaccharomyces pombe (strain 972 / ATCC 24843) (Fission yeast) protein is Small ribosomal subunit protein eS12A (rps1201).